Reading from the N-terminus, the 1031-residue chain is MPPGRWHAAYPAQAQSSRERGRLQTVKKEEEDESYTPVQAARPQTLNRPGQELFRQLFRQLRYHESSGPLETLSRLRELCRWWLRPDVLSKAQILELLVLEQFLSILPGELRVWVQLHNPESGEEAVALLEELQRDLDGTSWRDPGPAQSPDVHWMGTGALRSAQIWSLASPLRSSSALGDHLEPPYEIEARDFLAGQSDTPAAQMPALFPREGCPGDQVTPTRSLTAQLQETMTFKDVEVTFSQDEWGWLDSAQRNLYRDVMLENYRNMASLVGPFTKPALISWLEAREPWGLNMQAAQPKGNPVAAPTGDDLQSKTNKFILNQEPLEEAETLAVSSGCPATSVSEGIGLRESFQQKSRQKDQCENPIQVRVKKEETNFSHRTGKDSEVSGSNSLDLKHVTYLRVSGRKESLKHGCGKHFRMSSHHYDYKKYGKGLRHMIGGFSLHQRIHSGLKGNKKDVCGKDFSLSSHHQRGQSLHTVGVSFKCSDCGRTFSHSSHLAYHQRLHTQEKAFKCRVCGKAFRWSSNCARHEKIHTGVKPYKCDLCEKAFRRLSAYRLHRETHAKKKFLELNQYRAALTYSSGFDHHLGDQSGEKLFDCSQCRKSFHCKSYVLEHQRIHTQEKPYKCTKCRKTFRWRSNFTRHMRLHEEEKFYKQDECREGFRQSPDCSQPQGAPAVEKTFLCQQCGKTFTRKKTLVDHQRIHTGEKPYQCSDCGKDFAYRSAFIVHKKKHAMKRKPEGGPSFSQDTVFQVPQSSHSKEEPYKCSQCGKAFRNHSFLLIHQRVHTGEKPYKCRECGKAFRWSSNLYRHQRIHSLQKQYDCHESEKTPNVEPKILTGEKRFWCQECGKTFTRKRTLLDHKGIHSGEKRYKCNLCGKSYDRNYRLVNHQRIHSTERPFKCQWCGKEFIGRHTLSSHQRKHTRAAQAERSPPARSSSQDTKLRLQKLKPSEEMPLEDCKEACSQSSRLTGLQDISIGKKCHKCSICGKTFNKSSQLISHKRFHTRERPFKCSKCGKTFRWSSNLARHMKNHIRD.

Residues 1–43 (MPPGRWHAAYPAQAQSSRERGRLQTVKKEEEDESYTPVQAARP) are disordered. The span at 17–29 (SRERGRLQTVKKE) shows a compositional bias: basic and acidic residues. Lys28 is covalently cross-linked (Glycyl lysine isopeptide (Lys-Gly) (interchain with G-Cter in SUMO1)). The SCAN box domain occupies 55-137 (RQLFRQLRYH…ALLEELQRDL (83 aa)). Residues 234 to 304 (MTFKDVEVTF…NMQAAQPKGN (71 aa)) enclose the KRAB domain. Residues Lys317, Lys374, Lys375, and Lys399 each participate in a glycyl lysine isopeptide (Lys-Gly) (interchain with G-Cter in SUMO2) cross-link. C2H2-type zinc fingers lie at residues 485 to 507 (FKCS…QRLH), 513 to 535 (FKCR…EKIH), and 541 to 563 (YKCD…RETH). Lys567 participates in a covalent cross-link: Glycyl lysine isopeptide (Lys-Gly) (interchain with G-Cter in SUMO2). 2 consecutive C2H2-type zinc fingers follow at residues 597–619 (FDCS…QRIH) and 625–647 (YKCT…MRLH). Lys654 participates in a covalent cross-link: Glycyl lysine isopeptide (Lys-Gly) (interchain with G-Cter in SUMO2). C2H2-type zinc fingers lie at residues 681–703 (FLCQ…QRIH) and 709–731 (YQCS…KKKH). Residues Lys736 and Lys758 each participate in a glycyl lysine isopeptide (Lys-Gly) (interchain with G-Cter in SUMO2) cross-link. 5 consecutive C2H2-type zinc fingers follow at residues 762–784 (YKCS…QRVH), 790–812 (YKCR…QRIH), 840–862 (FWCQ…KGIH), 868–890 (YKCN…QRIH), and 896–918 (FKCQ…QRKH). The tract at residues 911 to 939 (LSSHQRKHTRAAQAERSPPARSSSQDTKL) is disordered. Glycyl lysine isopeptide (Lys-Gly) (interchain with G-Cter in SUMO2) cross-links involve residues Lys938, Lys956, and Lys975. 2 C2H2-type zinc fingers span residues 978-1000 (HKCS…KRFH) and 1006-1028 (FKCS…MKNH).

This sequence belongs to the krueppel C2H2-type zinc-finger protein family.

The protein resides in the nucleus. Functionally, transcription regulator required to maintain maternal and paternal gene imprinting, a process by which gene expression is restricted in a parent of origin-specific manner by epigenetic modification of genomic DNA and chromatin, including DNA methylation. Acts by controlling DNA methylation during the earliest multicellular stages of development at multiple imprinting control regions (ICRs). Acts together with ZFP57, but seems to be the major factor in human early embryonic imprinting maintenance. In contrast, in mice, ZFP57 plays the predominant role in imprinting maintenance. The protein is Zinc finger protein 445 of Homo sapiens (Human).